The primary structure comprises 301 residues: MSEPFKSGFVAIVGRPNVGKSTLLNHIIGQKIAIMSDKAQTTRNKVQGVFTTDESQIIFIDTPGIHKPKHKLGDFMVKIALNTFQEVDLIYFVIDASTGFGRGDEFIIEKLKNVQTPVFLLINKIDLISPEDLIKLIEQYRELMDFEEIIPISALEGNNVPNLLEQTNANLEIGPMYYPKDQITDHPERFIISELIREQVLQLTREEVPHSVAVVIEGIEKNPKTEKLTINATIIVERSTQKGIIIGKQGQMLKQIGMRARKEIESLLGSKVFLEIWVKVQKNWRDKEHYLHDYGFDREEY.

An Era-type G domain is found at 6–173; it reads KSGFVAIVGR…LEQTNANLEI (168 aa). Residues 14 to 21 are G1; the sequence is GRPNVGKS. 14 to 21 is a binding site for GTP; that stretch reads GRPNVGKS. The G2 stretch occupies residues 40–44; sequence QTTRN. The G3 stretch occupies residues 61-64; the sequence is DTPG. GTP-binding positions include 61-65 and 123-126; these read DTPGI and NKID. A G4 region spans residues 123-126; the sequence is NKID. The segment at 152–154 is G5; the sequence is ISA. The region spanning 204–282 is the KH type-2 domain; sequence TREEVPHSVA…FLEIWVKVQK (79 aa).

This sequence belongs to the TRAFAC class TrmE-Era-EngA-EngB-Septin-like GTPase superfamily. Era GTPase family. In terms of assembly, monomer.

It is found in the cytoplasm. It localises to the cell membrane. Its function is as follows. An essential GTPase that binds both GDP and GTP, with rapid nucleotide exchange. Plays a role in 16S rRNA processing and 30S ribosomal subunit biogenesis and possibly also in cell cycle regulation and energy metabolism. The polypeptide is GTPase Era (Listeria innocua serovar 6a (strain ATCC BAA-680 / CLIP 11262)).